A 292-amino-acid polypeptide reads, in one-letter code: High-affinity heme uptake system protein IsdE (292 aa).

A signal peptide spans 1 to 19 (MRIIKYLTILVISVVILTS). C20 carries N-palmitoyl cysteine lipidation. The S-diacylglycerol cysteine moiety is linked to residue C20. Residues 35 to 291 (RIVPTTVALT…QLYDLFYKDK (257 aa)) form the Fe/B12 periplasmic-binding domain. Residues V41, A42, S60, Y61, M78, and H229 each contribute to the heme site.

This sequence belongs to the bacterial solute-binding protein 8 family. The cofactor is heme b.

Its subcellular location is the cell membrane. Involved in heme (porphyrin) scavenging. Binds Fe(2+) and Fe(3+) heme but the largest fraction is Fe(2+) heme. Functions as a high-affinity heme binding protein and probably has a role in relaying heme-iron from cell wall-anchored isd proteins receptors to the probable permease IsdF. This is High-affinity heme uptake system protein IsdE (isdE) from Staphylococcus aureus (strain bovine RF122 / ET3-1).